Consider the following 937-residue polypeptide: Glycine dehydrogenase (decarboxylating) (937 aa).

Lys-686 is subject to N6-(pyridoxal phosphate)lysine.

This sequence belongs to the GcvP family. The glycine cleavage system is composed of four proteins: P, T, L and H. The cofactor is pyridoxal 5'-phosphate.

The catalysed reaction is N(6)-[(R)-lipoyl]-L-lysyl-[glycine-cleavage complex H protein] + glycine + H(+) = N(6)-[(R)-S(8)-aminomethyldihydrolipoyl]-L-lysyl-[glycine-cleavage complex H protein] + CO2. Its function is as follows. The glycine cleavage system catalyzes the degradation of glycine. The P protein binds the alpha-amino group of glycine through its pyridoxal phosphate cofactor; CO(2) is released and the remaining methylamine moiety is then transferred to the lipoamide cofactor of the H protein. The polypeptide is Glycine dehydrogenase (decarboxylating) (Mesorhizobium japonicum (strain LMG 29417 / CECT 9101 / MAFF 303099) (Mesorhizobium loti (strain MAFF 303099))).